Here is a 348-residue protein sequence, read N- to C-terminus: Selenide, water dikinase (348 aa).

Residue Cys-17 is part of the active site. ATP is bound by residues Lys-20 and 47-49 (THD). Asp-50 serves as a coordination point for Mg(2+). ATP is bound by residues Asp-67, Asp-90, and 138 to 140 (GHT). Asp-90 contributes to the Mg(2+) binding site. Asp-226 provides a ligand contact to Mg(2+).

The protein belongs to the selenophosphate synthase 1 family. Class I subfamily. As to quaternary structure, homodimer. Mg(2+) is required as a cofactor.

The catalysed reaction is hydrogenselenide + ATP + H2O = selenophosphate + AMP + phosphate + 2 H(+). Its function is as follows. Synthesizes selenophosphate from selenide and ATP. This is Selenide, water dikinase from Porphyromonas gingivalis (strain ATCC BAA-308 / W83).